A 334-amino-acid polypeptide reads, in one-letter code: Large ribosomal subunit protein uL3 (334 aa).

Residues Met1–Arg10 show a composition bias toward basic residues. The interval Met1–Ala21 is disordered.

This sequence belongs to the universal ribosomal protein uL3 family. In terms of assembly, part of the 50S ribosomal subunit. Forms a cluster with proteins L14 and L24e.

One of the primary rRNA binding proteins, it binds directly near the 3'-end of the 23S rRNA, where it nucleates assembly of the 50S subunit. This chain is Large ribosomal subunit protein uL3, found in Methanococcus vannielii (strain ATCC 35089 / DSM 1224 / JCM 13029 / OCM 148 / SB).